The following is a 340-amino-acid chain: Small ribosomal subunit biogenesis GTPase RsgA (340 aa).

Residues 20–34 (ERAERAERRARRDDT) are compositionally biased toward basic and acidic residues. Residues 20–42 (ERAERAERRARRDDTSLDAGDYG) form a disordered region. The region spanning 116 to 274 (RGQLKPVAAN…LIDSPGIREF (159 aa)) is the CP-type G domain. GTP contacts are provided by residues 163-166 (NKTD) and 216-224 (GQSGVGKSS). Positions 298, 303, 305, and 311 each coordinate Zn(2+).

Belongs to the TRAFAC class YlqF/YawG GTPase family. RsgA subfamily. Monomer. Associates with 30S ribosomal subunit, binds 16S rRNA. Zn(2+) serves as cofactor.

The protein resides in the cytoplasm. Its function is as follows. One of several proteins that assist in the late maturation steps of the functional core of the 30S ribosomal subunit. Helps release RbfA from mature subunits. May play a role in the assembly of ribosomal proteins into the subunit. Circularly permuted GTPase that catalyzes slow GTP hydrolysis, GTPase activity is stimulated by the 30S ribosomal subunit. The polypeptide is Small ribosomal subunit biogenesis GTPase RsgA (Chromohalobacter salexigens (strain ATCC BAA-138 / DSM 3043 / CIP 106854 / NCIMB 13768 / 1H11)).